A 438-amino-acid chain; its full sequence is Sphingomyelinase phosphodiesterase D (438 aa).

The N-terminal stretch at 1–17 (MKIILILVLVLVVSINA) is a signal peptide. Positions 27 and 29 each coordinate Zn(2+). A glycan (N-linked (GlcNAc...) asparagine) is linked at N40. Zn(2+) is bound by residues D111 and N148. N160 carries an N-linked (GlcNAc...) asparagine glycan. Residue H247 participates in Zn(2+) binding. N-linked (GlcNAc...) asparagine glycosylation is present at N271. Residues H287 and H289 each coordinate Zn(2+). Residues N338 and N359 are each glycosylated (N-linked (GlcNAc...) asparagine).

This sequence belongs to the acid sphingomyelinase family. Zn(2+) serves as cofactor.

The protein localises to the secreted. This Dictyostelium discoideum (Social amoeba) protein is Sphingomyelinase phosphodiesterase D (sgmD).